A 205-amino-acid polypeptide reads, in one-letter code: UPF0056 membrane protein MJ1677 (205 aa).

Helical transmembrane passes span 7 to 27 (ILAFSSIFSILNPFGAVPVFI), 49 to 69 (ALAILLAFALFGEWILKFFGI), 70 to 90 (SLDAFKIAGGILLLLISLDMV), 112 to 132 (IALMPLATPLLAGPGSITACM), 145 to 165 (FLVILAILLSLGITYLTLLSA), and 185 to 205 (GLILTAIAVQMIVNGIRGALL).

This sequence belongs to the UPF0056 (MarC) family.

It localises to the cell membrane. This is UPF0056 membrane protein MJ1677 from Methanocaldococcus jannaschii (strain ATCC 43067 / DSM 2661 / JAL-1 / JCM 10045 / NBRC 100440) (Methanococcus jannaschii).